Here is a 504-residue protein sequence, read N- to C-terminus: MSDKQKKPQKLKARLPRGFVDRSASDIRAVNEMTAKIRAVYEHYGFDPMETPLLEYTDALGKFLPDSDRPNEGVFSLQDDDEQWMSLRYDLTAPLARHVAENFNEIQLPYRTYRAGYVFRNEKPGPGRFRQFMQFDADTIGAPGVQADAEMCMMMADTLEALGIKRGDYLIRVNNRKVLDGVLEAIGLGGDDKAGQRLNVLRAIDKLDKFGPEGVALLLGPGRKDESGDFTKGAGLNAEQIDKVLFFVGIKDYAESAAQLAELVAGTSKGGEGVEELNFIGSLVTSAGYQSDRIKIDPSVVRGLEYYTGPVYEAELTFDVTNEKGEKVVFGSVAGGGRYDGLVSRFMGQPVPATGFAIGVSRLMTALKNLGKLGQDEVIAPVLVTVMDGDVEAMGRYQRFTQQLRAAGIRAEMFQGNWKKFGNQLKYADRRGCPIAIIQGGDERAEGVVQLKDLIEGKRLSGEIEDNASWREARVAQETVPEADLVAKVQAILAAQAEDRKRAE.

It belongs to the class-II aminoacyl-tRNA synthetase family. In terms of assembly, homodimer.

It localises to the cytoplasm. It carries out the reaction tRNA(His) + L-histidine + ATP = L-histidyl-tRNA(His) + AMP + diphosphate + H(+). The protein is Histidine--tRNA ligase of Rhizobium rhizogenes (strain K84 / ATCC BAA-868) (Agrobacterium radiobacter).